We begin with the raw amino-acid sequence, 123 residues long: Cysteine proteinase inhibitor 8 (123 aa).

Residues 1–19 (MARIPLLLALLLAVSAAAA) form the signal peptide. The Cystatin domain occupies 33–91 (GGWSPITDVGDPHIQELGGWAVERHASLSSDGLRFRRVTSGEQQVVSGMNYRLVVSASD). Positions 76-80 (QVVSG) match the Secondary area of contact motif.

Belongs to the cystatin family. Phytocystatin subfamily.

It localises to the secreted. Its function is as follows. Specific inhibitor of cysteine proteinases. Probably involved in the regulation of endogenous processes and in defense against pests and pathogens. This chain is Cysteine proteinase inhibitor 8, found in Oryza sativa subsp. japonica (Rice).